Consider the following 376-residue polypeptide: Pyruvate dehydrogenase E1 component subunit beta-2, mitochondrial (376 aa).

The N-terminal 36 residues, 1–36, are a transit peptide targeting the mitochondrion; the sequence is MLGAARRQLGSGPMLGQVLRRLRPATAAAADAARAY. E99 serves as a coordination point for thiamine diphosphate. I152, A200, I201, and D203 together coordinate K(+).

In terms of assembly, tetramer of 2 alpha and 2 beta subunits. Requires thiamine diphosphate as cofactor.

The protein resides in the mitochondrion matrix. The catalysed reaction is N(6)-[(R)-lipoyl]-L-lysyl-[protein] + pyruvate + H(+) = N(6)-[(R)-S(8)-acetyldihydrolipoyl]-L-lysyl-[protein] + CO2. In terms of biological role, the pyruvate dehydrogenase complex catalyzes the overall conversion of pyruvate to acetyl-CoA and CO(2). It contains multiple copies of three enzymatic components: pyruvate dehydrogenase (E1), dihydrolipoamide acetyltransferase (E2) and lipoamide dehydrogenase (E3). The polypeptide is Pyruvate dehydrogenase E1 component subunit beta-2, mitochondrial (Oryza sativa subsp. japonica (Rice)).